Reading from the N-terminus, the 286-residue chain is Shikimate dehydrogenase (NADP(+)) (286 aa).

Residues 22 to 24 and threonine 69 each bind shikimate; that span reads SFS. Lysine 73 (proton acceptor) is an active-site residue. Glutamate 85 is an NADP(+) binding site. 2 residues coordinate shikimate: asparagine 94 and aspartate 109. NADP(+)-binding positions include 133-137, 157-162, and leucine 231; these read GAGGA and NRTIDK. Tyrosine 233 contributes to the shikimate binding site. Glycine 254 serves as a coordination point for NADP(+).

This sequence belongs to the shikimate dehydrogenase family. In terms of assembly, homodimer.

The catalysed reaction is shikimate + NADP(+) = 3-dehydroshikimate + NADPH + H(+). It functions in the pathway metabolic intermediate biosynthesis; chorismate biosynthesis; chorismate from D-erythrose 4-phosphate and phosphoenolpyruvate: step 4/7. Functionally, involved in the biosynthesis of the chorismate, which leads to the biosynthesis of aromatic amino acids. Catalyzes the reversible NADPH linked reduction of 3-dehydroshikimate (DHSA) to yield shikimate (SA). In Alkaliphilus oremlandii (strain OhILAs) (Clostridium oremlandii (strain OhILAs)), this protein is Shikimate dehydrogenase (NADP(+)).